We begin with the raw amino-acid sequence, 183 residues long: Adenylate kinase (183 aa).

12–17 serves as a coordination point for ATP; sequence GAGKGT. Residues 32-61 are NMP; the sequence is STGDLLRSEVSAGSALGQEAEAVMNRGELV. AMP-binding positions include threonine 33, arginine 38, 59–61, 86–89, and glutamine 93; these read ELV and GFPR. An LID region spans residues 127-133; it reads ARGRADD. Residue arginine 128 coordinates ATP. AMP is bound by residues arginine 130 and arginine 141. ATP is bound at residue glycine 169.

This sequence belongs to the adenylate kinase family. Monomer.

The protein localises to the cytoplasm. The enzyme catalyses AMP + ATP = 2 ADP. The protein operates within purine metabolism; AMP biosynthesis via salvage pathway; AMP from ADP: step 1/1. In terms of biological role, catalyzes the reversible transfer of the terminal phosphate group between ATP and AMP. Plays an important role in cellular energy homeostasis and in adenine nucleotide metabolism. The chain is Adenylate kinase from Synechococcus sp. (strain WH7803).